The following is a 260-amino-acid chain: Thrombin-like enzyme 2 (260 aa).

The N-terminal stretch at 1 to 18 (MMLIRVLANLLILQLSYA) is a signal peptide. Residues 19 to 24 (QKSSEL) constitute a propeptide that is removed on maturation. The region spanning 25–251 (VIGGDECNIN…HLDWIQSIIA (227 aa)) is the Peptidase S1 domain. Intrachain disulfides connect C31-C165, C52-C68, C102-C258, C144-C212, C176-C191, and C202-C227. The active-site Charge relay system is the H67. An N-linked (GlcNAc...) asparagine glycan is attached at N105. D112 (charge relay system) is an active-site residue. N156 and N172 each carry an N-linked (GlcNAc...) asparagine glycan. Residue S206 is the Charge relay system of the active site. Residue N253 is glycosylated (N-linked (GlcNAc...) asparagine).

Belongs to the peptidase S1 family. Snake venom subfamily. In terms of assembly, monomer. As to expression, expressed by the venom gland.

It is found in the secreted. Its function is as follows. Thrombin-like snake venom serine protease. The polypeptide is Thrombin-like enzyme 2 (Trimeresurus albolabris (White-lipped pit viper)).